A 232-amino-acid polypeptide reads, in one-letter code: Sugar fermentation stimulation protein homolog (232 aa).

It belongs to the SfsA family.

The sequence is that of Sugar fermentation stimulation protein homolog from Pelagibacter ubique (strain HTCC1062).